The following is a 103-amino-acid chain: UPF0473 protein SGO_2040 (103 aa).

This sequence belongs to the UPF0473 family.

This chain is UPF0473 protein SGO_2040, found in Streptococcus gordonii (strain Challis / ATCC 35105 / BCRC 15272 / CH1 / DL1 / V288).